A 268-amino-acid chain; its full sequence is Tryptophan synthase alpha chain (268 aa).

Residues E49 and D60 each act as proton acceptor in the active site.

The protein belongs to the TrpA family. In terms of assembly, tetramer of two alpha and two beta chains.

It carries out the reaction (1S,2R)-1-C-(indol-3-yl)glycerol 3-phosphate + L-serine = D-glyceraldehyde 3-phosphate + L-tryptophan + H2O. The protein operates within amino-acid biosynthesis; L-tryptophan biosynthesis; L-tryptophan from chorismate: step 5/5. Functionally, the alpha subunit is responsible for the aldol cleavage of indoleglycerol phosphate to indole and glyceraldehyde 3-phosphate. The chain is Tryptophan synthase alpha chain from Shigella boydii serotype 4 (strain Sb227).